We begin with the raw amino-acid sequence, 141 residues long: Large ribosomal subunit protein bL17 (141 aa).

This sequence belongs to the bacterial ribosomal protein bL17 family. Part of the 50S ribosomal subunit. Contacts protein L32.

This Maridesulfovibrio salexigens (strain ATCC 14822 / DSM 2638 / NCIMB 8403 / VKM B-1763) (Desulfovibrio salexigens) protein is Large ribosomal subunit protein bL17.